Here is an 87-residue protein sequence, read N- to C-terminus: U3-theraphotoxin-Hhn1a 16 (87 aa).

Residues 1–24 form the signal peptide; the sequence is MVNMKASMFLTFAGLVLLFVVCYA. The propeptide occupies 25-52; that stretch reads SESEEKEFPKEMLSSIFAVDNDFKQGER. Intrachain disulfides connect C54/C67, C61/C72, and C66/C79.

It belongs to the neurotoxin 10 (Hwtx-1) family. 51 (Hntx-8) subfamily. Hntx-8 sub-subfamily. In terms of tissue distribution, expressed by the venom gland.

Its subcellular location is the secreted. Ion channel inhibitor. The chain is U3-theraphotoxin-Hhn1a 16 from Cyriopagopus hainanus (Chinese bird spider).